We begin with the raw amino-acid sequence, 1424 residues long: DNA-directed RNA polymerase subunit beta' (1424 aa).

Zn(2+) is bound by residues C60, C62, C75, and C78. Mg(2+) is bound by residues D449, D451, and D453. Zn(2+) contacts are provided by C783, C857, C864, and C867.

This sequence belongs to the RNA polymerase beta' chain family. The RNAP catalytic core consists of 2 alpha, 1 beta, 1 beta' and 1 omega subunit. When a sigma factor is associated with the core the holoenzyme is formed, which can initiate transcription. Mg(2+) serves as cofactor. Zn(2+) is required as a cofactor.

It carries out the reaction RNA(n) + a ribonucleoside 5'-triphosphate = RNA(n+1) + diphosphate. Functionally, DNA-dependent RNA polymerase catalyzes the transcription of DNA into RNA using the four ribonucleoside triphosphates as substrates. In Treponema denticola (strain ATCC 35405 / DSM 14222 / CIP 103919 / JCM 8153 / KCTC 15104), this protein is DNA-directed RNA polymerase subunit beta'.